The sequence spans 407 residues: Phosphopentomutase (407 aa).

6 residues coordinate Mn(2+): Asp-10, Asp-306, His-311, Asp-347, His-348, and His-359.

Belongs to the phosphopentomutase family. Mn(2+) is required as a cofactor.

It is found in the cytoplasm. The enzyme catalyses 2-deoxy-alpha-D-ribose 1-phosphate = 2-deoxy-D-ribose 5-phosphate. It carries out the reaction alpha-D-ribose 1-phosphate = D-ribose 5-phosphate. The protein operates within carbohydrate degradation; 2-deoxy-D-ribose 1-phosphate degradation; D-glyceraldehyde 3-phosphate and acetaldehyde from 2-deoxy-alpha-D-ribose 1-phosphate: step 1/2. Functionally, isomerase that catalyzes the conversion of deoxy-ribose 1-phosphate (dRib-1-P) and ribose 1-phosphate (Rib-1-P) to deoxy-ribose 5-phosphate (dRib-5-P) and ribose 5-phosphate (Rib-5-P), respectively. The sequence is that of Phosphopentomutase from Pectobacterium carotovorum subsp. carotovorum (strain PC1).